The following is a 338-amino-acid chain: Heat-inducible transcription repressor HrcA (338 aa).

This sequence belongs to the HrcA family.

Its function is as follows. Negative regulator of class I heat shock genes (grpE-dnaK-dnaJ and groELS operons). Prevents heat-shock induction of these operons. This is Heat-inducible transcription repressor HrcA from Polaromonas sp. (strain JS666 / ATCC BAA-500).